The following is a 49-amino-acid chain: Large ribosomal subunit protein bL33 (49 aa).

The interval 18 to 49 is disordered; it reads ITTKNKRNNPERLELKKYSPRLKRTTLHRETK. The segment covering 25 to 34 has biased composition (basic and acidic residues); that stretch reads NNPERLELKK.

It belongs to the bacterial ribosomal protein bL33 family.

The sequence is that of Large ribosomal subunit protein bL33 from Lysinibacillus sphaericus (strain C3-41).